Consider the following 254-residue polypeptide: 3-deoxy-manno-octulosonate cytidylyltransferase (254 aa).

This sequence belongs to the KdsB family.

Its subcellular location is the cytoplasm. It carries out the reaction 3-deoxy-alpha-D-manno-oct-2-ulosonate + CTP = CMP-3-deoxy-beta-D-manno-octulosonate + diphosphate. The protein operates within nucleotide-sugar biosynthesis; CMP-3-deoxy-D-manno-octulosonate biosynthesis; CMP-3-deoxy-D-manno-octulosonate from 3-deoxy-D-manno-octulosonate and CTP: step 1/1. Its pathway is bacterial outer membrane biogenesis; lipopolysaccharide biosynthesis. Its function is as follows. Activates KDO (a required 8-carbon sugar) for incorporation into bacterial lipopolysaccharide in Gram-negative bacteria. The sequence is that of 3-deoxy-manno-octulosonate cytidylyltransferase from Chlamydia trachomatis serovar L2 (strain ATCC VR-902B / DSM 19102 / 434/Bu).